Consider the following 183-residue polypeptide: Translation initiation factor IF-3 (183 aa).

This sequence belongs to the IF-3 family. In terms of assembly, monomer.

It localises to the cytoplasm. IF-3 binds to the 30S ribosomal subunit and shifts the equilibrium between 70S ribosomes and their 50S and 30S subunits in favor of the free subunits, thus enhancing the availability of 30S subunits on which protein synthesis initiation begins. This chain is Translation initiation factor IF-3, found in Pseudomonas putida (strain W619).